The following is a 503-amino-acid chain: Maturase K (503 aa).

Belongs to the intron maturase 2 family. MatK subfamily.

Its subcellular location is the plastid. It is found in the chloroplast. In terms of biological role, usually encoded in the trnK tRNA gene intron. Probably assists in splicing its own and other chloroplast group II introns. This is Maturase K from Liquidambar styraciflua (Sweetgum tree).